Consider the following 268-residue polypeptide: Cyclohexadienyl dehydratase (268 aa).

A signal peptide spans 1-25; the sequence is MPKSFRHLVQALACLALLASASLQA.

This sequence belongs to the bacterial solute-binding protein 3 family. Homodimer.

It is found in the periplasm. It catalyses the reaction prephenate + H(+) = 3-phenylpyruvate + CO2 + H2O. The enzyme catalyses L-arogenate + H(+) = L-phenylalanine + CO2 + H2O. Its pathway is amino-acid biosynthesis; L-phenylalanine biosynthesis; L-phenylalanine from L-arogenate: step 1/1. It functions in the pathway amino-acid biosynthesis; L-phenylalanine biosynthesis; phenylpyruvate from prephenate: step 1/1. In terms of biological role, forms alternative pathway for phenylalanine biosynthesis. Can catalyze two reactions: prephenate dehydratase and arogenate dehydratase. May have a role in chemotaxis or transport. The protein is Cyclohexadienyl dehydratase (pheC) of Pseudomonas aeruginosa (strain ATCC 15692 / DSM 22644 / CIP 104116 / JCM 14847 / LMG 12228 / 1C / PRS 101 / PAO1).